A 722-amino-acid chain; its full sequence is Probable acyl-activating enzyme 16, chloroplastic (722 aa).

The transit peptide at 1-47 directs the protein to the chloroplast; that stretch reads MASTSLGASILVSHCSSAPEFQVSGMRLVFGYKAFGCRTSRRGFRVR.

This sequence belongs to the ATP-dependent AMP-binding enzyme family.

It is found in the plastid. The protein localises to the chloroplast. May be involved in the activation of fatty acids to acyl-carrier-protein. In Arabidopsis thaliana (Mouse-ear cress), this protein is Probable acyl-activating enzyme 16, chloroplastic (AAE16).